Here is a 122-residue protein sequence, read N- to C-terminus: Large ribosomal subunit protein uL14 (122 aa).

It belongs to the universal ribosomal protein uL14 family. In terms of assembly, part of the 50S ribosomal subunit. Forms a cluster with proteins L3 and L19. In the 70S ribosome, L14 and L19 interact and together make contacts with the 16S rRNA in bridges B5 and B8.

In terms of biological role, binds to 23S rRNA. Forms part of two intersubunit bridges in the 70S ribosome. The chain is Large ribosomal subunit protein uL14 from Acetivibrio thermocellus (strain ATCC 27405 / DSM 1237 / JCM 9322 / NBRC 103400 / NCIMB 10682 / NRRL B-4536 / VPI 7372) (Clostridium thermocellum).